A 145-amino-acid polypeptide reads, in one-letter code: MIALIQRALSASVVVEGNIVGEIGPGLLVLLGVEQGDTEQKAQRLCERVLGYRIFSDENDKMNLNVQQAGGSVLVVSQFTLVADTQKGMRPSFSRGAIPQEADRLYQYFVAQCRERGVKTETGLFAADMKVSLVNDGPVTFWLQV.

The short motif at 137–138 (GP) is the Gly-cisPro motif, important for rejection of L-amino acids element.

This sequence belongs to the DTD family. Homodimer.

It localises to the cytoplasm. The enzyme catalyses glycyl-tRNA(Ala) + H2O = tRNA(Ala) + glycine + H(+). The catalysed reaction is a D-aminoacyl-tRNA + H2O = a tRNA + a D-alpha-amino acid + H(+). Functionally, an aminoacyl-tRNA editing enzyme that deacylates mischarged D-aminoacyl-tRNAs. Also deacylates mischarged glycyl-tRNA(Ala), protecting cells against glycine mischarging by AlaRS. Acts via tRNA-based rather than protein-based catalysis; rejects L-amino acids rather than detecting D-amino acids in the active site. By recycling D-aminoacyl-tRNA to D-amino acids and free tRNA molecules, this enzyme counteracts the toxicity associated with the formation of D-aminoacyl-tRNA entities in vivo and helps enforce protein L-homochirality. This Yersinia pestis bv. Antiqua (strain Antiqua) protein is D-aminoacyl-tRNA deacylase.